The sequence spans 377 residues: Succinyl-diaminopimelate desuccinylase (377 aa).

Residue His-66 coordinates Zn(2+). Asp-68 is a catalytic residue. Position 99 (Asp-99) interacts with Zn(2+). The active-site Proton acceptor is Glu-133. 3 residues coordinate Zn(2+): Glu-134, Glu-162, and His-348.

It belongs to the peptidase M20A family. DapE subfamily. As to quaternary structure, homodimer. Zn(2+) is required as a cofactor. It depends on Co(2+) as a cofactor.

It carries out the reaction N-succinyl-(2S,6S)-2,6-diaminopimelate + H2O = (2S,6S)-2,6-diaminopimelate + succinate. It participates in amino-acid biosynthesis; L-lysine biosynthesis via DAP pathway; LL-2,6-diaminopimelate from (S)-tetrahydrodipicolinate (succinylase route): step 3/3. Catalyzes the hydrolysis of N-succinyl-L,L-diaminopimelic acid (SDAP), forming succinate and LL-2,6-diaminopimelate (DAP), an intermediate involved in the bacterial biosynthesis of lysine and meso-diaminopimelic acid, an essential component of bacterial cell walls. The polypeptide is Succinyl-diaminopimelate desuccinylase (Xylella fastidiosa (strain 9a5c)).